The primary structure comprises 142 residues: MKTFVAKPETVKRDWYVVDAEGKTLGRLASEIASRLRGKHKAEYTPHVDAGDYIIVINAEKVAVTGNKAKDKVYYRHSEFPGGLKSITFEKLIDRKPEMVLELAVKGMLPRGPLGRAMYRKLKVYAGAEHNHVAQQPQVLDI.

Belongs to the universal ribosomal protein uL13 family. In terms of assembly, part of the 50S ribosomal subunit.

Functionally, this protein is one of the early assembly proteins of the 50S ribosomal subunit, although it is not seen to bind rRNA by itself. It is important during the early stages of 50S assembly. The protein is Large ribosomal subunit protein uL13 of Vibrio parahaemolyticus serotype O3:K6 (strain RIMD 2210633).